Here is an 891-residue protein sequence, read N- to C-terminus: uncharacterized protein (891 aa).

An N-terminal signal peptide occupies residues 1–20 (MKILKSLVLLVLFMAMPAKA). A run of 6 helical transmembrane segments spans residues 525 to 545 (VTIFGLMFVTGALKLTAVEVI), 568 to 588 (TYFFSAFTDGIDFFVTNVVGA), 614 to 634 (LLFIELLQIHNGLAFIAIITI), 652 to 672 (VIAFIGVTVMISLAPFFIILM), 685 to 705 (ISTLLSYVVQPTILLIFFLLI), and 776 to 796 (FLVLFTTALLFYSYCLMSYSL).

This sequence belongs to the TrbL/VirB6 family.

It is found in the cell membrane. This is an uncharacterized protein from Rickettsia conorii (strain ATCC VR-613 / Malish 7).